The primary structure comprises 231 residues: Ion-translocating oxidoreductase complex subunit E (231 aa).

A run of 6 helical transmembrane segments spans residues 18–38 (ALVQ…ATNA), 39–59 (LGLG…ISTL), 63–83 (TPAE…VSAV), 86–106 (LINA…PLIV), 125–145 (ALSA…MCVL), and 182–202 (PFLL…MLAG).

The protein belongs to the NqrDE/RnfAE family. As to quaternary structure, the complex is composed of six subunits: RsxA, RsxB, RsxC, RsxD, RsxE and RsxG.

It is found in the cell inner membrane. Functionally, part of a membrane-bound complex that couples electron transfer with translocation of ions across the membrane. Required to maintain the reduced state of SoxR. The sequence is that of Ion-translocating oxidoreductase complex subunit E from Escherichia coli (strain SMS-3-5 / SECEC).